The following is a 384-amino-acid chain: Multidrug/solvent efflux pump periplasmic linker protein MepA (384 aa).

Positions 1–22 are cleaved as a signal peptide; sequence MQFKPAVTALVSAVALATLLSG. C23 is lipidated: N-palmitoyl cysteine. The S-diacylglycerol cysteine moiety is linked to residue C23. The stretch at 115–155 forms a coiled coil; that stretch reads LAERYKQLIDEQAVSKQEYDDANAKRLQAEASLKSAQIDLR. The tract at residues 362-384 is disordered; sequence ATNVKKPAGPDQANAAKADAKAE. The span at 368 to 378 shows a compositional bias: low complexity; sequence PAGPDQANAAK.

It belongs to the membrane fusion protein (MFP) (TC 8.A.1) family.

The protein localises to the cell inner membrane. Its function is as follows. The periplasmic linker protein component of an organic solvent and antibiotic efflux pump; confers resistance to toluene, hexane, p-xylene, ampicillin, penicillin G, erythromycin, novobiocin and tetracycline. This chain is Multidrug/solvent efflux pump periplasmic linker protein MepA (mepA), found in Pseudomonas putida (Arthrobacter siderocapsulatus).